The following is a 495-amino-acid chain: Probable polyamine transporter At1g31830 (495 aa).

Transmembrane regions (helical) follow at residues 49–69, 79–99, 112–132, 156–176, 186–206, 230–250, 267–287, 357–377, 380–400, 417–437, and 442–462; these read VSML…PFGV, LLAL…EALI, GYVV…QGWM, VPAL…TILL, IVGW…AVMG, LYLN…TLAG, VILV…AIPL, TPLL…WLSF, IVAA…IAFV, IGTT…CAVV, and LKVA…HPLL.

The protein belongs to the amino acid-polyamine-organocation (APC) superfamily. Polyamine:cation symporter (PHS) (TC 2.A.3.12) family.

The protein localises to the cell membrane. Probable cell membrane polyamine/proton symporter involved in the polyamine uptake in cells. This is Probable polyamine transporter At1g31830 from Arabidopsis thaliana (Mouse-ear cress).